Here is a 338-residue protein sequence, read N- to C-terminus: tRNA-specific 2-thiouridylase MnmA (338 aa).

Residues 6-13 and Met32 contribute to the ATP site; that span reads LMSGGIDS. The active-site Nucleophile is the Cys87. Cys87 and Cys185 form a disulfide bridge. Residue Gly111 participates in ATP binding. Residues 135–137 are interaction with tRNA; sequence KDQ. Residue Cys185 is the Cysteine persulfide intermediate of the active site. Positions 288–289 are interaction with tRNA; sequence RY.

Belongs to the MnmA/TRMU family.

Its subcellular location is the cytoplasm. It catalyses the reaction S-sulfanyl-L-cysteinyl-[protein] + uridine(34) in tRNA + AH2 + ATP = 2-thiouridine(34) in tRNA + L-cysteinyl-[protein] + A + AMP + diphosphate + H(+). Functionally, catalyzes the 2-thiolation of uridine at the wobble position (U34) of tRNA, leading to the formation of s(2)U34. In Syntrophomonas wolfei subsp. wolfei (strain DSM 2245B / Goettingen), this protein is tRNA-specific 2-thiouridylase MnmA.